A 378-amino-acid polypeptide reads, in one-letter code: MKHSVHFGAGNIGRGFIGEILFKNGFHIDFVDVNNQIIHALNEKGKYEIEIAQKGQSRIEVTNVAGINSKEHPEQVIEAIQKTDIITTAIGPNILPFIAELLAKGIEARRVAGNTQALDVMACENMIGGSQFLYQEVKKYLSPEGLTFADNYIGFPNAAVDRIVPAQSHEDSLFVVVEPFNEWVVETKRLKNPDLRLKDVHYEEDLEPFIERKLFSVNSGHATSAYIGAHYGAKTILEALQNPNIKSRIESVLAEIRSLLIAKWNFDKKELENYHKVIIERLENPFIVDEVSRVARTPIRKLGYNERFIRPIRELKELSLSYKNLLKTVGYVFDYRDVNDEESIRLGELLAKQSVKDVVIQVTGLDDQELIEQIVEYI.

4–15 is an NAD(+) binding site; sequence SVHFGAGNIGRG.

Belongs to the mannitol dehydrogenase family.

The enzyme catalyses D-mannitol 1-phosphate + NAD(+) = beta-D-fructose 6-phosphate + NADH + H(+). The sequence is that of Mannitol-1-phosphate 5-dehydrogenase from Streptococcus pneumoniae serotype 4 (strain ATCC BAA-334 / TIGR4).